A 275-amino-acid polypeptide reads, in one-letter code: Polyamine aminopropyltransferase (275 aa).

The PABS domain maps to 2 to 235 (HLWFTEKQND…AMWSFTIGSK (234 aa)). Gln31 contacts S-methyl-5'-thioadenosine. Spermidine is bound by residues His62 and Asp86. S-methyl-5'-thioadenosine-binding positions include Glu106 and 137 to 138 (DG). Asp155 (proton acceptor) is an active-site residue. Residue 155 to 158 (DSTD) participates in spermidine binding. Pro162 is an S-methyl-5'-thioadenosine binding site.

The protein belongs to the spermidine/spermine synthase family. As to quaternary structure, homodimer or homotetramer.

It is found in the cytoplasm. It catalyses the reaction S-adenosyl 3-(methylsulfanyl)propylamine + putrescine = S-methyl-5'-thioadenosine + spermidine + H(+). The protein operates within amine and polyamine biosynthesis; spermidine biosynthesis; spermidine from putrescine: step 1/1. In terms of biological role, catalyzes the irreversible transfer of a propylamine group from the amino donor S-adenosylmethioninamine (decarboxy-AdoMet) to putrescine (1,4-diaminobutane) to yield spermidine. This chain is Polyamine aminopropyltransferase, found in Desulforudis audaxviator (strain MP104C).